A 590-amino-acid polypeptide reads, in one-letter code: Aspartate--tRNA(Asp/Asn) ligase (590 aa).

Glu170 is an L-aspartate binding site. The aspartate stretch occupies residues 194 to 197 (QLFK). Arg216 is a binding site for L-aspartate. ATP contacts are provided by residues 216–218 (RDE) and Gln225. Residue His448 participates in L-aspartate binding. Glu482 serves as a coordination point for ATP. Arg489 serves as a coordination point for L-aspartate. Position 534 to 537 (534 to 537 (GWDR)) interacts with ATP. The segment at 557–590 (SGGGADPLTGAPAPITPQQRRESGIDAKPKKDGE) is disordered. A compositionally biased stretch (basic and acidic residues) spans 575–590 (QRRESGIDAKPKKDGE).

The protein belongs to the class-II aminoacyl-tRNA synthetase family. Type 1 subfamily. In terms of assembly, homodimer.

The protein localises to the cytoplasm. The enzyme catalyses tRNA(Asx) + L-aspartate + ATP = L-aspartyl-tRNA(Asx) + AMP + diphosphate. Its function is as follows. Aspartyl-tRNA synthetase with relaxed tRNA specificity since it is able to aspartylate not only its cognate tRNA(Asp) but also tRNA(Asn). Reaction proceeds in two steps: L-aspartate is first activated by ATP to form Asp-AMP and then transferred to the acceptor end of tRNA(Asp/Asn). The polypeptide is Aspartate--tRNA(Asp/Asn) ligase (Mycobacterium sp. (strain KMS)).